A 242-amino-acid chain; its full sequence is Uridylate kinase (242 aa).

11 to 14 (KLSG) contacts ATP. Position 53 (G53) interacts with UMP. ATP is bound by residues G54 and R58. Residues D73 and 134 to 141 (SGNPFFTT) each bind UMP. The ATP site is built by T161, Y167, and D170.

Belongs to the UMP kinase family. As to quaternary structure, homohexamer.

The protein resides in the cytoplasm. It carries out the reaction UMP + ATP = UDP + ADP. It participates in pyrimidine metabolism; CTP biosynthesis via de novo pathway; UDP from UMP (UMPK route): step 1/1. Its activity is regulated as follows. Inhibited by UTP. In terms of biological role, catalyzes the reversible phosphorylation of UMP to UDP. The chain is Uridylate kinase from Thermosynechococcus vestitus (strain NIES-2133 / IAM M-273 / BP-1).